The chain runs to 133 residues: Putative biopolymer transport protein ExbD-like 2 (133 aa).

Over 1–9 (MKKVESMNV) the chain is Cytoplasmic. Residues 10-30 (VPFIDIMLVLLVIVLTTASFV) traverse the membrane as a helical segment. The Periplasmic segment spans residues 31–133 (QTSKLPISIP…LVEDKKNQKN (103 aa)).

Belongs to the ExbD/TolR family.

The protein localises to the cell inner membrane. The chain is Putative biopolymer transport protein ExbD-like 2 from Helicobacter pylori (strain J99 / ATCC 700824) (Campylobacter pylori J99).